We begin with the raw amino-acid sequence, 138 residues long: MFVKLCGILAFAVTYASSDCLQCICKKESECKPVGCNDDVGSLSCGYYQIKLSYYKDCGQPGKRAGESVEAAWRRCSDELDCASTCVQSYYNRYKKQCAGTGQGACEIMARNHNGGPRGCKKSATLGYWNGIKGLGCS.

The first 18 residues, 1 to 18, serve as a signal peptide directing secretion; that stretch reads MFVKLCGILAFAVTYASS. Residues 19–138 form the I-type lysozyme domain; that stretch reads DCLQCICKKE…WNGIKGLGCS (120 aa). 6 disulfide bridges follow: Cys-20–Cys-106, Cys-25–Cys-31, Cys-36–Cys-45, Cys-58–Cys-86, Cys-76–Cys-82, and Cys-98–Cys-120. Residue Glu-28 is the Proton donor of the active site. The Nucleophile role is filled by Asp-39. A substrate-binding site is contributed by 51-57; it reads KLSYYKD. Substrate-binding positions include Tyr-90 and 113-115; that span reads HNG.

The protein belongs to the glycosyl hydrolase 22 family. Type-I lysozyme subfamily. Expressed in pharyngeal gland cells and duct projections, coelomocytes and intestine.

The catalysed reaction is Hydrolysis of (1-&gt;4)-beta-linkages between N-acetylmuramic acid and N-acetyl-D-glucosamine residues in a peptidoglycan and between N-acetyl-D-glucosamine residues in chitodextrins.. Functionally, has bacteriolytic activity against Gram-positive bacteria. This chain is Invertebrate-type lysozyme 6, found in Caenorhabditis elegans.